We begin with the raw amino-acid sequence, 342 residues long: D-erythrose-4-phosphate dehydrogenase (342 aa).

11–12 serves as a coordination point for NAD(+); it reads RI. Substrate contacts are provided by residues 153–155, R199, 212–213, and R235; these read SCT and TK. The active-site Nucleophile is the C154. Residue N317 coordinates NAD(+).

The protein belongs to the glyceraldehyde-3-phosphate dehydrogenase family. Epd subfamily. Homotetramer.

The protein localises to the cytoplasm. The enzyme catalyses D-erythrose 4-phosphate + NAD(+) + H2O = 4-phospho-D-erythronate + NADH + 2 H(+). Its pathway is cofactor biosynthesis; pyridoxine 5'-phosphate biosynthesis; pyridoxine 5'-phosphate from D-erythrose 4-phosphate: step 1/5. Catalyzes the NAD-dependent conversion of D-erythrose 4-phosphate to 4-phosphoerythronate. The protein is D-erythrose-4-phosphate dehydrogenase of Shewanella denitrificans (strain OS217 / ATCC BAA-1090 / DSM 15013).